The chain runs to 110 residues: Phosphoribosyl-AMP cyclohydrolase (110 aa).

Mg(2+) is bound at residue aspartate 80. A Zn(2+)-binding site is contributed by cysteine 81. Positions 82 and 84 each coordinate Mg(2+). Zn(2+) is bound by residues cysteine 97 and cysteine 104.

Belongs to the PRA-CH family. Homodimer. The cofactor is Mg(2+). Zn(2+) is required as a cofactor.

The protein resides in the cytoplasm. The enzyme catalyses 1-(5-phospho-beta-D-ribosyl)-5'-AMP + H2O = 1-(5-phospho-beta-D-ribosyl)-5-[(5-phospho-beta-D-ribosylamino)methylideneamino]imidazole-4-carboxamide. It functions in the pathway amino-acid biosynthesis; L-histidine biosynthesis; L-histidine from 5-phospho-alpha-D-ribose 1-diphosphate: step 3/9. In terms of biological role, catalyzes the hydrolysis of the adenine ring of phosphoribosyl-AMP. The chain is Phosphoribosyl-AMP cyclohydrolase from Clostridium botulinum (strain ATCC 19397 / Type A).